The sequence spans 1558 residues: Calmodulin-regulated spectrin-associated protein 1-B (1558 aa).

The region spanning 231–346 (WYWKLVPVRY…FIAELFWWFE (116 aa)) is the Calponin-homology (CH) domain. 3 stretches are compositionally biased toward polar residues: residues 400–417 (VQNS…SGFS), 440–450 (ACRNRSNSLTQ), and 504–516 (ASTV…SHPG). Disordered regions lie at residues 400–464 (VQNS…SDKR), 504–523 (ASTV…VRRI), 551–585 (NDIT…SDSR), 602–675 (AKEK…APGQ), 737–790 (TKEL…VASG), 803–850 (QRFG…QNKD), and 943–968 (DRSK…SSSP). Residues 602 to 620 (AKEKSISLNKEEESGEGRQ) are compositionally biased toward basic and acidic residues. Over residues 643–658 (QTLNRTFTPNTSSEFE) the composition is skewed to polar residues. The span at 737 to 772 (TKELHPDKKQHFEEEVESAKLREDMNVKEHEDKDGG) shows a compositional bias: basic and acidic residues. Low complexity-rich tracts occupy residues 776–790 (SSPG…VASG) and 812–822 (RSSTSSSQRTT). A coiled-coil region spans residues 849–887 (KDNANMLASELVQLHMQLEEKRRAIESQKKKMEILTARQ). A compositionally biased stretch (basic and acidic residues) spans 943–955 (DRSKEAEEPEKAS). The stretch at 971 to 1004 (VEEEVDLNECNRSIELLNEAIGSIQQQMMQLSLQ) forms a coiled coil. Disordered stretches follow at residues 1041–1131 (FVEP…TFHL), 1257–1293 (LRKQ…RREL), 1305–1344 (ELCE…KCPA), and 1360–1414 (LASV…ITST). The segment covering 1080 to 1090 (SSTPTPTDSPS) has biased composition (low complexity). The span at 1106–1115 (DFVQSSVRSE) shows a compositional bias: polar residues. The stretch at 1243–1303 (AFLLKQQRKA…IKQEYLRKKQ (61 aa)) forms a coiled coil. Basic residues predominate over residues 1317-1328 (PKTKPKKQRLKS). A CKK domain is found at 1421-1555 (GPKLFKEPSA…QAKRPAGPKK (135 aa)).

It belongs to the CAMSAP1 family.

It localises to the cytoplasm. It is found in the cytoskeleton. Its function is as follows. Key microtubule-organizing protein that specifically binds the minus-end of non-centrosomal microtubules and regulates their dynamics and organization. Specifically recognizes growing microtubule minus-ends and stabilizes microtubules. Acts on free microtubule minus-ends that are not capped by microtubule-nucleating proteins or other factors and protects microtubule minus-ends from depolymerization. In contrast to camsap2 and camsap3, tracks along the growing tips of minus-end microtubules without significantly affecting the polymerization rate: binds at the very tip of the microtubules minus-end and acts as a minus-end tracking protein (-TIP) that dissociates from microtubules after allowing tubulin incorporation. Through interaction with spectrin may regulate neurite outgrowth. In Danio rerio (Zebrafish), this protein is Calmodulin-regulated spectrin-associated protein 1-B (camsap1b).